We begin with the raw amino-acid sequence, 117 residues long: Gamma-aminobutyric acid receptor-associated protein-like 2 (117 aa).

At Lys24 the chain carries N6-acetyllysine. Residues Ser39, Ser87, and Ser88 each carry the phosphoserine modification. Gly116 carries Phosphatidylethanolamine amidated glycine; alternate lipidation. The Phosphatidylserine amidated glycine; alternate moiety is linked to residue Gly116. A propeptide (removed in mature form) is located at residue Phe117.

Belongs to the ATG8 family. In terms of assembly, monomer. Interacts with ATG3, ATG7, ATG13 and ULK1. Interacts with TP53INP1 and TP53INP2. Interacts with TBC1D25. Directly interacts with SQSTM1 and BNIP3. Interacts with TECPR2 and PCM1. Interacts with TBC1D5. Interacts with TRIM5. Interacts with MEFV and TRIM21. Interacts with WDFY3. Interacts with UBA5; promoting recruitment of UBA5 to the endoplasmic reticulum membrane. Interacts with GOSR1. Interacts with KBTBD6 and KBTBD7; the interaction is direct. Interacts with reticulophagy regulators RETREG1, RETREG2 and RETREG3. Interacts with IRGM. Interacts with DNM2. Interacts with NCOA4. Interacts with IRGQ. Post-translationally, the precursor molecule is cleaved by ATG4 (ATG4A, ATG4B, ATG4C or ATG4D) to expose the glycine at the C-terminus and form the cytosolic form, GABARAPL2-I. The processed form is then activated by APG7L/ATG7, transferred to ATG3 and conjugated to phosphatidylethanolamine (PE) phospholipid to form the membrane-bound form, GABARAPL2-II. During non-canonical autophagy, the processed form is conjugated to phosphatidylserine (PS) phospholipid. ATG4 proteins also mediate the delipidation of PE-conjugated forms required for GABARAPL2 recycling when autophagosomes fuse with lysosomes. In addition, ATG4B and ATG4D mediate delipidation of ATG8 proteins conjugated to PS during non-canonical autophagy. ATG4B constitutes the major protein for proteolytic activation. ATG4D is the main enzyme for delipidation activity. Phosphorylation at Ser-87 and Ser-88 by TBK1 prevents interaction with ATG4 (ATG4A, ATG4B, ATG4C or ATG4D). Phosphorylation by TBK1 on autophagosomes prevents their delipidation by ATG4 and premature removal from nascent autophagosomes. In terms of tissue distribution, ubiquitous. Expressed at high levels in the brain, heart, prostate, ovary, spleen and skeletal muscle. Expressed at very low levels in lung, thymus and small intestine.

The protein resides in the cytoplasmic vesicle. It localises to the autophagosome. It is found in the endoplasmic reticulum membrane. Its subcellular location is the golgi apparatus. Its function is as follows. Ubiquitin-like modifier involved in intra-Golgi traffic. Modulates intra-Golgi transport through coupling between NSF activity and SNAREs activation. It first stimulates the ATPase activity of NSF which in turn stimulates the association with GOSR1. Involved in autophagy. Plays a role in mitophagy which contributes to regulate mitochondrial quantity and quality by eliminating the mitochondria to a basal level to fulfill cellular energy requirements and preventing excess ROS production. Whereas LC3s are involved in elongation of the phagophore membrane, the GABARAP/GATE-16 subfamily is essential for a later stage in autophagosome maturation. The protein is Gamma-aminobutyric acid receptor-associated protein-like 2 of Bos taurus (Bovine).